Reading from the N-terminus, the 176-residue chain is NAD(P)H-quinone oxidoreductase subunit J (176 aa).

A disordered region spans residues 1-32; the sequence is MEKEGLAKSSDTSIKKEGFISQSLSKDGIPNQ. A compositionally biased stretch (polar residues) spans 20–32; sequence ISQSLSKDGIPNQ.

This sequence belongs to the complex I 30 kDa subunit family. As to quaternary structure, NDH-1 can be composed of about 15 different subunits; different subcomplexes with different compositions have been identified which probably have different functions.

Its subcellular location is the cellular thylakoid membrane. The enzyme catalyses a plastoquinone + NADH + (n+1) H(+)(in) = a plastoquinol + NAD(+) + n H(+)(out). It catalyses the reaction a plastoquinone + NADPH + (n+1) H(+)(in) = a plastoquinol + NADP(+) + n H(+)(out). In terms of biological role, NDH-1 shuttles electrons from an unknown electron donor, via FMN and iron-sulfur (Fe-S) centers, to quinones in the respiratory and/or the photosynthetic chain. The immediate electron acceptor for the enzyme in this species is believed to be plastoquinone. Couples the redox reaction to proton translocation, and thus conserves the redox energy in a proton gradient. Cyanobacterial NDH-1 also plays a role in inorganic carbon-concentration. In Prochlorococcus marinus (strain MIT 9215), this protein is NAD(P)H-quinone oxidoreductase subunit J.